Consider the following 793-residue polypeptide: Calcium permeable stress-gated cation channel 1 (793 aa).

Over 1 to 21 (MAFNGYGIFDSDPRKNPSSDL) the chain is Lumenal. The helical transmembrane segment at 22 to 42 (RTQFWLAFLLGASACVFFCFF) threads the bilayer. Topologically, residues 43–95 (RKRWKVLYAPRTTIEGLNLPTLSSSYYKWLMDLVNIPDDVVQNCAGLDGYVFL) are cytoplasmic. The helical transmembrane segment at 96–116 (LFFKMGIKFLSFASLLGVLII) threads the bilayer. The Lumenal portion of the chain corresponds to 117 to 192 (MPVNKHFRGD…IPGLPQPGDG (76 aa)). Residues 193–213 (FLYLYVLFTYFISIFLLYVLF) traverse the membrane as a helical segment. At 214–444 (SSTKSIADIR…HKFFQGWFIT (231 aa)) the chain is on the cytoplasmic side. The helical transmembrane segment at 445–465 (LVTFMIILLWTVPVGAIAVFI) threads the bilayer. The Lumenal portion of the chain corresponds to 466 to 493 (NLDTIRRLWPELGRMIEDLPFLNSLLRT). A helical transmembrane segment spans residues 494 to 514 (FLPTLVYSLFISISPFLFRWL). The Cytoplasmic portion of the chain corresponds to 515 to 534 (SSMQGLSSRAEEEIYAVGKN). Residues 535-555 (YAYLFVNFFLVYVIAGSTSIW) traverse the membrane as a helical segment. The Lumenal portion of the chain corresponds to 556–577 (ELAKDTTSFAHFLANRLPHQAQ). The chain crosses the membrane as a helical span at residues 578–598 (FFIDLIVLQGIGMFPLKLIQL). Residues 599–646 (GKLSSYFVRRSFVPYSIASKKFETPDSFSVGIFLPQPMFIMLICLCYS) are Cytoplasmic-facing. The chain crosses the membrane as a helical span at residues 647-667 (IISPLILVFGLIYFIIGFLVY). Residues 668–687 (KYELIYQMEHPQHSTGELWS) lie on the Lumenal side of the membrane. A helical membrane pass occupies residues 688-708 (TIFLRMIFGCVIMQLTMMGLM). The Cytoplasmic portion of the chain corresponds to 709–713 (SLRKA). The helical transmembrane segment at 714–734 (YWLSTVIFPLLCFTVISAYNF) threads the bilayer. At 735-793 (STMIRSSMQFVSLYYIRTHQSNTLSSESESRNSESSGSYVHPGFDLSNEELPLIDLNTA) the chain is on the lumenal side. A disordered region spans residues 759–778 (SSESESRNSESSGSYVHPGF).

It belongs to the CSC1 (TC 1.A.17) family.

The protein localises to the vacuole membrane. Acts as an osmosensitive calcium-permeable cation channel. This chain is Calcium permeable stress-gated cation channel 1, found in Schizosaccharomyces pombe (strain 972 / ATCC 24843) (Fission yeast).